The following is a 245-amino-acid chain: tRNA pseudouridine synthase A (245 aa).

D52 functions as the Nucleophile in the catalytic mechanism. Y111 serves as a coordination point for substrate.

It belongs to the tRNA pseudouridine synthase TruA family. Homodimer.

It carries out the reaction uridine(38/39/40) in tRNA = pseudouridine(38/39/40) in tRNA. Its function is as follows. Formation of pseudouridine at positions 38, 39 and 40 in the anticodon stem and loop of transfer RNAs. This chain is tRNA pseudouridine synthase A, found in Thermotoga sp. (strain RQ2).